The chain runs to 495 residues: Mothers against decapentaplegic homolog 6 (495 aa).

Positions 1–15 (MFRSKRSGLVRRLWR) are enriched in basic residues. 2 disordered regions span residues 1 to 115 (MFRS…PGWL) and 133 to 161 (AAGA…RSRE). A dimethylated arginine; alternate mark is found at Arg74 and Arg81. Arg74 and Arg81 each carry omega-N-methylarginine; alternate. An MH1 domain is found at 149 to 276 (PEPEEGGGPR…FSRLCGPESP (128 aa)). Residue Lys174 forms a Glycyl lysine isopeptide (Lys-Gly) (interchain with G-Cter in ubiquitin) linkage. Positions 206, 248, 261, and 266 each coordinate Zn(2+). Residues 332 to 495 (WCSVAYWEHR…WLEILLNNHR (164 aa)) form the MH2 domain. Ser436 carries the phosphoserine; by PRKX; in vitro modification.

This sequence belongs to the dwarfin/SMAD family. In terms of assembly, interacts with NEDD4L. Interacts with WWP1. Interacts with STAMBP and PRKX. Interacts with RNF111 and AXIN1. Interacts with TGF-beta type I receptor superfamily members, including ACVR1B, BMPR1B and TGFBR1. In response to BMP2 treatment, interacts with SMAD1; this interaction may inhibit SMAD1-binding to SMAD4. Interacts with HOXC8 and HOXC9. Interacts with PELI1; this interaction interferes with PELI1 complex formation with TRAF6, IRAK1, IRAK4 and MYD88 in response to IL1B and hence negatively regulates IL1R-TLR signaling. Interacts with TSC22D1/TSC-22. Monoubiquitinated at Lys-174 by the E2/E3 hybrid ubiquitin-protein ligase UBE2O, leading to reduced binding affinity for the activated BMP type I receptor ACVR1/ALK2, thereby enhancing BMP7 and regulating adipocyte differentiation. Ubiquitinated by WWP1. Ubiquitinated by ARK2C, promoting proteasomal degradation, leading to enhance the BMP-Smad signaling. Post-translationally, arginine methylation by PRMT1, which is recruited by BMPR2, initiates BMP-Induced signaling and induces dissociation from the BMPR1B receptor at the cell surface leading to derepress downstream Smad1/Smad5 signaling. In terms of processing, phosphorylated by BMP type 1 receptor kinase and by PRKX. As to expression, ubiquitous in various organs, with higher levels in lung.

The protein resides in the nucleus. Its function is as follows. Transforming growth factor-beta superfamily receptors signaling occurs through the Smad family of intracellular mediators. SMAD6 is an inhibitory Smad (i-Smad) that negatively regulates signaling downstream of type I transforming growth factor-beta. Acts as a mediator of TGF-beta and BMP anti-inflammatory activities. Suppresses IL1R-TLR signaling through its direct interaction with PEL1, preventing NF-kappa-B activation, nuclear transport and NF-kappa-B-mediated expression of pro-inflammatory genes. Blocks the BMP-SMAD1 signaling pathway by competing with SMAD4 for receptor-activated SMAD1-binding. Binds to regulatory elements in target promoter regions. This is Mothers against decapentaplegic homolog 6 (Smad6) from Mus musculus (Mouse).